The following is a 571-amino-acid chain: MSSQVLASSQKNDKTQNIIRPTTKFHPPIWGDRFLHYNISEQELEYKEGQVEELKEVVRKEIFHGNNKRNIINVSKQLKLIDDVERLGLSYHFESEIEKKLQHIYEITTNNIDHQDQHYYYSNHDEDLHDVSIRFRLLRQHGFNISSNIFEKFKDESGKFKESLKSDIEGMLSLYEASYLSYVEENILDEALAFTTTNLKLVANKKEHPLSHEISLALYRPLRKTLVRLYARHYISIYEKQPSHNKVLLQFAKLDFNLLQSLHKKELSEISRWWKELDLANKLPFARNRIVELYLWILGVFHEPQFSLARKILIKAISMASVADDIYDAYGTFEELELLTEAILRWDISFIDKLSPDYLKTYYKVFLNSYEECEKDLKKEERYKLHYAKESMKKLIQAYFHEAQWLNQGHFPSFDEHLKVSFVSSGYPMLIETSFVGMQDVKTNQVFEWLSTQPKIFRACTIISRFMDDLVSRKFEQERNHVPSTVDCYMKQYGVSEQEACDELNKQVVNLWKEINQEFLRPTSMPSSILVRILNFTKVLDIIYKEGDGYTHVGKLVKDSVAALLIDPIPL.

Arg-287, Asp-324, Asp-328, Arg-465, and Asp-468 together coordinate (2E,6E)-farnesyl diphosphate. Residues Asp-324 and Asp-328 each coordinate Mg(2+). Residues 324–328 carry the DDXXD motif motif; that stretch reads DDIYD. 3 residues coordinate Mg(2+): Asp-468, Ser-472, and Glu-476.

This sequence belongs to the terpene synthase family. Tpsb subfamily. Mg(2+) is required as a cofactor. It depends on Mn(2+) as a cofactor. In terms of tissue distribution, highly expressed in glandular trichomes.

It catalyses the reaction (2E,6E)-farnesyl diphosphate = (1E,4E)-germacrene B + diphosphate. Its pathway is secondary metabolite biosynthesis; terpenoid biosynthesis. Its function is as follows. Involved in sesquiterpene olefins biosynthesis, constituants of cannabinoids and terpenoids-rich resins. Catalyzes mainly the conversion of (2E)-farnesyl diphosphate to germacrene B, which is spontaneously converted to gamma-elemene as a thermal degradation product. The protein is Germacrene B synthase TPS16CC of Cannabis sativa (Hemp).